Reading from the N-terminus, the 61-residue chain is Large ribosomal subunit protein bL32 (61 aa).

Basic residues predominate over residues 1–16; that stretch reads MAVPRRKTSPSRRGMR. The disordered stretch occupies residues 1 to 61; it reads MAVPRRKTSP…RQVLKVKKED (61 aa). The span at 17–44 shows a compositional bias: basic and acidic residues; sequence RSADALKKPTYVEDKDSGELRRPHHLDL.

Belongs to the bacterial ribosomal protein bL32 family.

This is Large ribosomal subunit protein bL32 from Afipia carboxidovorans (strain ATCC 49405 / DSM 1227 / KCTC 32145 / OM5) (Oligotropha carboxidovorans).